Reading from the N-terminus, the 153-residue chain is UPF0311 protein RPA1785 (153 aa).

It belongs to the UPF0311 family.

In Rhodopseudomonas palustris (strain ATCC BAA-98 / CGA009), this protein is UPF0311 protein RPA1785.